The following is a 259-amino-acid chain: Glycerol-3-phosphate acyltransferase (259 aa).

Transmembrane regions (helical) follow at residues 11-31, 62-82, 93-112, 124-144, 152-172, 188-208, and 211-231; these read IILA…IIIV, LVVA…AILL, TSYF…PIYY, LGLL…VWFI, VSVA…IPYL, FSVA…HYWF, and IWAS…LILG.

This sequence belongs to the PlsY family. In terms of assembly, probably interacts with PlsX.

Its subcellular location is the cell membrane. The catalysed reaction is an acyl phosphate + sn-glycerol 3-phosphate = a 1-acyl-sn-glycero-3-phosphate + phosphate. It functions in the pathway lipid metabolism; phospholipid metabolism. Catalyzes the transfer of an acyl group from acyl-phosphate (acyl-PO(4)) to glycerol-3-phosphate (G3P) to form lysophosphatidic acid (LPA). This enzyme utilizes acyl-phosphate as fatty acyl donor, but not acyl-CoA or acyl-ACP. The polypeptide is Glycerol-3-phosphate acyltransferase (Mycoplasma capricolum subsp. capricolum (strain California kid / ATCC 27343 / NCTC 10154)).